We begin with the raw amino-acid sequence, 461 residues long: MAEKSSKKLWGGRFSGATDPLMAEFNKSIYSGKEMCEEDVIGSMAYAKALCQKNVISEEELNSILKGLEQIQREWNSGQFVLEPSDEDVHTANERRLTEIIGDVAGKLHTGRSRNDQVTTDLRLWLCRKIKEVEVYVINLLKVFTNRAEMEIDVIMSGYTHLQRAQPVRWSHFLMSHALPLLGDLGRLRQLYTRVSQLPLGAGALAGNPFNVDREFLRKELGFEGIIMNSMNAVGDRDFVIEFMFWAGMVMLHISRFAEDLIIYSSSEFGFVTLSDAYSTGSSIMPQKKNPDSLELLRGKSGRVLGDMIGLMITVKGTPTTYNKDLQEDKEPLFDAFKTVSDSLQILTGVVSTLTINPTKIAESLTPDLLATDLAEYLVRKGLPFRQTHHISGSAVRMAEERNTTLDKLSVSDLQSLHPLFDEDVSKVFNYEESVEKRCSIGGTAKHCVQEQIEHIRSAIL.

2-(N(omega)-L-arginino)succinate is bound by residues Ser28, Asn115, and Thr160. His161 acts as the Proton acceptor in catalysis. Ser282 (proton donor) is an active-site residue. The 2-(N(omega)-L-arginino)succinate site is built by Asn290, Tyr322, Gln327, and Lys330.

The protein belongs to the lyase 1 family. Argininosuccinate lyase subfamily. As to quaternary structure, homotetramer.

The catalysed reaction is 2-(N(omega)-L-arginino)succinate = fumarate + L-arginine. The protein operates within amino-acid biosynthesis; L-arginine biosynthesis; L-arginine from L-ornithine and carbamoyl phosphate: step 3/3. This Schizosaccharomyces pombe (strain 972 / ATCC 24843) (Fission yeast) protein is Argininosuccinate lyase (arg7).